The primary structure comprises 372 residues: N-acetylneuraminate-9-phosphate synthase (372 aa).

One can recognise an AFP-like domain in the interval 314 to 372; sequence SIVAARNLNKGYRLQLADMAIKVSEPSGLTAEDFLDLVGKELADNIGEDEPILGNSIIN.

The enzyme catalyses aldehydo-N-acetyl-D-mannosamine 6-phosphate + phosphoenolpyruvate + H2O = N-acetylneuraminate 9-phosphate + phosphate. The catalysed reaction is aldehydo-D-mannose 6-phosphate + phosphoenolpyruvate + H2O = 3-deoxy-D-glycero-beta-D-galacto-non-2-ulopyranosonate 9-phosphate + phosphate. Catalyzes the condensation of phosphoenolpyruvate (PEP) and N-acetylmannosamine 6-phosphate (ManNAc-6-P) or D-mannose 6-phosphate (Man-6-P) to generate the phosphorylated forms of both the sialic acids N-acetylneuraminic acid (Neu5Ac) and deaminoneuraminic acid (KDN), respectively. Essential for biosynthesis of sialic acids in neurons of the central nervous system. This is N-acetylneuraminate-9-phosphate synthase from Drosophila melanogaster (Fruit fly).